A 325-amino-acid polypeptide reads, in one-letter code: GTP 3',8-cyclase (325 aa).

In terms of domain architecture, Radical SAM core spans 10 to 229; sequence GYGRRINYLR…PSLEKIKSED (220 aa). Residue arginine 19 coordinates GTP. [4Fe-4S] cluster contacts are provided by cysteine 26 and cysteine 30. Residue tyrosine 32 participates in S-adenosyl-L-methionine binding. Cysteine 33 is a binding site for [4Fe-4S] cluster. Arginine 69 contacts GTP. S-adenosyl-L-methionine is bound at residue glycine 73. Threonine 100 lines the GTP pocket. An S-adenosyl-L-methionine-binding site is contributed by serine 124. Lysine 161 is a binding site for GTP. Methionine 195 contacts S-adenosyl-L-methionine. Positions 257 and 260 each coordinate [4Fe-4S] cluster. GTP is bound at residue 262–264; the sequence is RLR. [4Fe-4S] cluster is bound at residue cysteine 274.

It belongs to the radical SAM superfamily. MoaA family. Monomer and homodimer. Requires [4Fe-4S] cluster as cofactor.

The catalysed reaction is GTP + AH2 + S-adenosyl-L-methionine = (8S)-3',8-cyclo-7,8-dihydroguanosine 5'-triphosphate + 5'-deoxyadenosine + L-methionine + A + H(+). Its pathway is cofactor biosynthesis; molybdopterin biosynthesis. Catalyzes the cyclization of GTP to (8S)-3',8-cyclo-7,8-dihydroguanosine 5'-triphosphate. The chain is GTP 3',8-cyclase from Peptoclostridium acidaminophilum (Eubacterium acidaminophilum).